A 140-amino-acid chain; its full sequence is Probable NADH dehydrogenase [ubiquinone] iron-sulfur protein 6, mitochondrial (140 aa).

It belongs to the complex I NDUFS6 subunit family. Complex I is composed of 45 different subunits. This is a component of the iron-sulfur (IP) fragment of the enzyme.

It is found in the mitochondrion inner membrane. In terms of biological role, accessory subunit of the mitochondrial membrane respiratory chain NADH dehydrogenase (Complex I), that is believed not to be involved in catalysis. Complex I functions in the transfer of electrons from NADH to the respiratory chain. The immediate electron acceptor for the enzyme is believed to be ubiquinone. This Caenorhabditis elegans protein is Probable NADH dehydrogenase [ubiquinone] iron-sulfur protein 6, mitochondrial (nduf-6).